Consider the following 451-residue polypeptide: Penicillin-binding protein 4* (451 aa).

The active-site Acyl-ester intermediate is Ser61.

This sequence belongs to the beta-lactamase family.

Its subcellular location is the forespore outer membrane. It functions in the pathway cell wall biogenesis; peptidoglycan biosynthesis. In terms of biological role, probably involved in peptidoglycan modification during cortex synthesis. This is Penicillin-binding protein 4* (pbpE) from Bacillus subtilis (strain 168).